Here is a 545-residue protein sequence, read N- to C-terminus: Glucose-6-phosphate isomerase (545 aa).

Residue glutamate 351 is the Proton donor of the active site. Active-site residues include histidine 382 and lysine 510.

Belongs to the GPI family.

The protein resides in the cytoplasm. The enzyme catalyses alpha-D-glucose 6-phosphate = beta-D-fructose 6-phosphate. The protein operates within carbohydrate biosynthesis; gluconeogenesis. Its pathway is carbohydrate degradation; glycolysis; D-glyceraldehyde 3-phosphate and glycerone phosphate from D-glucose: step 2/4. Its function is as follows. Catalyzes the reversible isomerization of glucose-6-phosphate to fructose-6-phosphate. In Helicobacter pylori (strain P12), this protein is Glucose-6-phosphate isomerase.